The primary structure comprises 833 residues: Leucine--tRNA ligase (833 aa).

A 'HIGH' region motif is present at residues P41–H52. The short motif at K610–S614 is the 'KMSKS' region element. An ATP-binding site is contributed by K613.

The protein belongs to the class-I aminoacyl-tRNA synthetase family.

It is found in the cytoplasm. The catalysed reaction is tRNA(Leu) + L-leucine + ATP = L-leucyl-tRNA(Leu) + AMP + diphosphate. The protein is Leucine--tRNA ligase of Streptococcus pneumoniae (strain CGSP14).